Consider the following 460-residue polypeptide: Transcription factor AP-2-beta (460 aa).

K21 participates in a covalent cross-link: Glycyl lysine isopeptide (Lys-Gly) (interchain with G-Cter in SUMO). Positions 30–139 (HDGVPSHSSR…PQLSGLDPRR (110 aa)) are disordered. Positions 35 to 51 (SHSSRLSQLGSVSQGPY) are enriched in polar residues. Positions 121 to 132 (LLPQPRAALPQL) are enriched in low complexity. S258 is modified (phosphoserine; by PKA). Residues 435-460 (NTTTNRHTSGEGPGSKTGDKEEKHRK) form a disordered region. Over residues 451–460 (TGDKEEKHRK) the composition is skewed to basic and acidic residues.

The protein belongs to the AP-2 family. As to quaternary structure, binds DNA as a dimer. Can form homodimers or heterodimers with other AP-2 family members. Interacts with CITED4. Interacts with UBE2I. Interacts with KCTD1; this interaction represses transcription activation. Interacts with CITED2 (via C-terminus); the interaction stimulates TFAP2B-transcriptional activity. Sumoylated on Lys-21; which inhibits transcriptional activity.

It localises to the nucleus. Functionally, sequence-specific DNA-binding protein that interacts with inducible viral and cellular enhancer elements to regulate transcription of selected genes. AP-2 factors bind to the consensus sequence 5'-GCCNNNGGC-3' and activate genes involved in a large spectrum of important biological functions including proper eye, face, body wall, limb and neural tube development. They also suppress a number of genes including MCAM/MUC18, C/EBP alpha and MYC. AP-2-beta appears to be required for normal face and limb development and for proper terminal differentiation and function of renal tubular epithelia. This Canis lupus familiaris (Dog) protein is Transcription factor AP-2-beta (TFAP2B).